Here is an 83-residue protein sequence, read N- to C-terminus: SPPVCGNELLEEGEECDCDSPANCQDRCCNAATCKLTPGSQCNYGECCDQCKFKKARTVCRIARGDWNDDYCTGKSSDCPWNH.

The region spanning 2 to 83 (PPVCGNELLE…GKSSDCPWNH (82 aa)) is the Disintegrin domain. 7 disulfide bridges follow: Cys-5–Cys-24, Cys-16–Cys-34, Cys-18–Cys-29, Cys-28–Cys-51, Cys-42–Cys-48, Cys-47–Cys-72, and Cys-60–Cys-79. The Cell attachment site signature appears at 64–66 (RGD).

Belongs to the venom metalloproteinase (M12B) family. P-II subfamily. P-IIa sub-subfamily. Monomer (disintegrin). Expressed by the venom gland.

It is found in the secreted. In terms of biological role, inhibits fibrinogen interaction with platelets. Acts by binding to the alpha-IIb/beta-3 (ITGA2B/ITGB3) on the platelet surface and inhibits aggregation induced by ADP, thrombin, platelet-activating factor and collagen. The polypeptide is Disintegrin isoform D-2 (Bitis arietans (African puff adder)).